The following is a 318-amino-acid chain: Transaldolase (318 aa).

Lys132 acts as the Schiff-base intermediate with substrate in catalysis.

Belongs to the transaldolase family. Type 1 subfamily. Homodimer.

It is found in the cytoplasm. It carries out the reaction D-sedoheptulose 7-phosphate + D-glyceraldehyde 3-phosphate = D-erythrose 4-phosphate + beta-D-fructose 6-phosphate. It functions in the pathway carbohydrate degradation; pentose phosphate pathway; D-glyceraldehyde 3-phosphate and beta-D-fructose 6-phosphate from D-ribose 5-phosphate and D-xylulose 5-phosphate (non-oxidative stage): step 2/3. Transaldolase is important for the balance of metabolites in the pentose-phosphate pathway. The sequence is that of Transaldolase from Shewanella piezotolerans (strain WP3 / JCM 13877).